The sequence spans 212 residues: Large ribosomal subunit protein uL1 (212 aa).

Belongs to the universal ribosomal protein uL1 family. In terms of assembly, part of the 50S ribosomal subunit.

Binds directly to 23S rRNA. Probably involved in E site tRNA release. In terms of biological role, protein L1 is also a translational repressor protein, it controls the translation of its operon by binding to its mRNA. The chain is Large ribosomal subunit protein uL1 from Halobacterium salinarum (strain ATCC 29341 / DSM 671 / R1).